The sequence spans 417 residues: Phosphoglycerate kinase 1 (417 aa).

Ser-2 carries the post-translational modification N-acetylserine. 2 positions are modified to phosphoserine: Ser-2 and Ser-4. Lys-6 bears the N6-succinyllysine mark. At Lys-11 the chain carries N6-acetyllysine. The (2R)-3-phosphoglycerate site is built by Val-23, Asp-24, Phe-25, Asn-26, Gln-38, and Arg-39. Residues 38–43 are mitochondrial targeting region exposed following cis-trans isomerization by PIN1 and recognized by the TOM complex for mitochondrial translocation of the protein; that stretch reads QRIKAA. At Lys-48 the chain carries N6-acetyllysine; alternate. Lys-48 is subject to N6-succinyllysine; alternate. (2R)-3-phosphoglycerate is bound by residues Ser-62, His-63, Gly-65, and Arg-66. The residue at position 75 (Lys-75) is an N6-acetyllysine. Residue Tyr-76 is modified to Phosphotyrosine. 2 positions are modified to N6-acetyllysine: Lys-86 and Lys-91. Lys-97 bears the N6-acetyllysine; alternate mark. The residue at position 97 (Lys-97) is an N6-(2-hydroxyisobutyryl)lysine; alternate. (2R)-3-phosphoglycerate contacts are provided by Leu-122 and Arg-123. At Lys-131 the chain carries N6-acetyllysine; alternate. Lys-131 carries the N6-malonyllysine; alternate modification. Lys-146 is modified (N6-acetyllysine). (2R)-3-phosphoglycerate-binding residues include His-170 and Arg-171. Lys-191 carries the post-translational modification N6-succinyllysine. Residue Tyr-196 is modified to Phosphotyrosine. Residue Lys-199 is modified to N6-acetyllysine. The residue at position 203 (Ser-203) is a Phosphoserine. Gly-214 serves as a coordination point for ADP. Gly-214 lines the CDP pocket. AMP is bound by residues Ala-215 and Lys-216. Ala-215 provides a ligand contact to ATP. Ala-215 is a binding site for Mg(2+). Position 216 is an N6-(2-hydroxyisobutyryl)lysine (Lys-216). Positions 218 and 219 each coordinate Mg(2+). Asp-219 contacts CDP. Residue Lys-220 coordinates AMP. ATP is bound at residue Lys-220. Lys-220 is modified (N6-(2-hydroxyisobutyryl)lysine). Gly-238 provides a ligand contact to ADP. CDP is bound at residue Gly-238. Gly-239 is a binding site for AMP. Gly-239 is an ATP binding site. An N6-acetyllysine mark is found at Lys-267 and Lys-291. Gly-313 contributes to the AMP binding site. Gly-313 is an ATP binding site. Position 323 is an N6-(2-hydroxyisobutyryl)lysine (Lys-323). CDP is bound by residues Gly-338, Val-340, and Phe-343. Residue Phe-343 coordinates ADP. Glu-344 contacts AMP. ATP is bound at residue Glu-344. Lys-361 carries the N6-acetyllysine modification. The ATP site is built by Asp-375 and Thr-376. Asp-375 is a Mg(2+) binding site.

This sequence belongs to the phosphoglycerate kinase family. In terms of assembly, monomer. Interacts with kinase MAPK1/ERK2; the interaction is direct, occurs under hypoxic conditions, and promotes its interaction with PIN1. Interacts with peptidyl-prolyl cis-trans isomerase PIN1; the interaction is direct, occurs under hypoxic conditions, and targets the protein to the mitochondrion by promoting interactions with the TOM complex. Interacts with mitochondrial circRNA mcPGK1 (via its 2nd stem-loop); the interaction is direct and targets the protein to the mitochondrion by promoting interactions with the TOM complex. Interacts with pyruvate dehydrogenase kinase PDK1; the interaction is direct, occurs under hypoxic conditions and leads to PDK1-mediated inhibition of pyruvate dehydrogenase complex activity. Requires Mg(2+) as cofactor. Post-translationally, phosphorylated at Ser-203 by MAPK1/ERK2 under hypoxic conditions, which promotes its mitochondrial targeting.

The protein localises to the cytoplasm. The protein resides in the cytosol. It is found in the mitochondrion matrix. It carries out the reaction (2R)-3-phosphoglycerate + ATP = (2R)-3-phospho-glyceroyl phosphate + ADP. It catalyses the reaction L-seryl-[protein] + ATP = O-phospho-L-seryl-[protein] + ADP + H(+). It participates in carbohydrate degradation; glycolysis; pyruvate from D-glyceraldehyde 3-phosphate: step 2/5. Its function is as follows. Catalyzes one of the two ATP producing reactions in the glycolytic pathway via the reversible conversion of 1,3-diphosphoglycerate to 3-phosphoglycerate. Both L- and D- forms of purine and pyrimidine nucleotides can be used as substrates, but the activity is much lower on pyrimidines. In addition to its role as a glycolytic enzyme, it seems that PGK-1 acts as a polymerase alpha cofactor protein (primer recognition protein). Acts as a protein kinase when localized to the mitochondrion where it phosphorylates pyruvate dehydrogenase kinase PDK1 to inhibit pyruvate dehydrogenase complex activity and suppress the formation of acetyl-coenzyme A from pyruvate, and consequently inhibit oxidative phosphorylation and promote glycolysis. May play a role in sperm motility. The sequence is that of Phosphoglycerate kinase 1 (PGK1) from Cricetulus griseus (Chinese hamster).